Reading from the N-terminus, the 443-residue chain is Glutamine synthetase (443 aa).

The 87-residue stretch at Val-11 to Glu-97 folds into the GS beta-grasp domain. In terms of domain architecture, GS catalytic spans Pro-103–Val-443. Residues Glu-126 and Glu-128 each coordinate Mg(2+). Glu-176 is an ATP binding site. Residues Glu-181 and Glu-188 each coordinate Mg(2+). Gly-233 contacts L-glutamate. His-237 lines the Mg(2+) pocket. ATP-binding positions include His-239–Ser-241 and Ser-241. 3 residues coordinate L-glutamate: Arg-287, Glu-293, and Arg-305. ATP is bound by residues Arg-305 and Arg-310. Glu-322 contributes to the Mg(2+) binding site. Arg-324 is an L-glutamate binding site.

The protein belongs to the glutamine synthetase family. In terms of assembly, oligomer of 12 subunits arranged in the form of two hexagons. Mg(2+) serves as cofactor. Requires Mn(2+) as cofactor.

The protein localises to the cytoplasm. It carries out the reaction L-glutamate + NH4(+) + ATP = L-glutamine + ADP + phosphate + H(+). It catalyses the reaction hydroxylamine + L-glutamate + ATP = L-glutamine hydroxamate + ADP + phosphate. The activity of this enzyme is not controlled by adenylation. Functionally, carries out the ATP-dependent synthesis of glutamine from ammonium nitrogen and glutamate. Exhibits both L-gamma-glutamylhydroxamate synthetase and gamma-glutamyltransferase activities when using hydroxylamine as substrate; in fact, the enzyme possesses low biosynthetic activity, suggesting that the reaction is biased towards the degradation of glutamine under ammonia-rich conditions. Might play some role in ammonia assimilation under ammonia-starvation conditions. Can also use GTP instead of ATP in the synthetase reaction, but not CTP or UTP. The protein is Glutamine synthetase of Thermococcus kodakarensis (strain ATCC BAA-918 / JCM 12380 / KOD1) (Pyrococcus kodakaraensis (strain KOD1)).